Consider the following 82-residue polypeptide: Cytochrome b559 subunit alpha (82 aa).

Residues 22-36 form a helical membrane-spanning segment; it reads VIHAITLPSIFLAGF. Position 24 (histidine 24) interacts with heme.

Belongs to the PsbE/PsbF family. As to quaternary structure, heterodimer of an alpha subunit and a beta subunit. PSII is composed of 1 copy each of membrane proteins PsbA, PsbB, PsbC, PsbD, PsbE, PsbF, PsbH, PsbI, PsbJ, PsbK, PsbL, PsbM, PsbT, PsbX, PsbY, PsbZ, Psb30/Ycf12, peripheral proteins PsbO, CyanoQ (PsbQ), PsbU, PsbV and a large number of cofactors. It forms dimeric complexes. Heme b is required as a cofactor.

Its subcellular location is the cellular thylakoid membrane. In terms of biological role, this b-type cytochrome is tightly associated with the reaction center of photosystem II (PSII). PSII is a light-driven water:plastoquinone oxidoreductase that uses light energy to abstract electrons from H(2)O, generating O(2) and a proton gradient subsequently used for ATP formation. It consists of a core antenna complex that captures photons, and an electron transfer chain that converts photonic excitation into a charge separation. The protein is Cytochrome b559 subunit alpha of Synechococcus sp. (strain CC9311).